The chain runs to 254 residues: Triosephosphate isomerase (254 aa).

Position 12 to 14 (12 to 14) interacts with substrate; that stretch reads NWK. Residue H99 is the Electrophile of the active site. E169 acts as the Proton acceptor in catalysis. Residues G175, S214, and 235-236 contribute to the substrate site; that span reads GG.

Belongs to the triosephosphate isomerase family. As to quaternary structure, homodimer.

Its subcellular location is the cytoplasm. It carries out the reaction D-glyceraldehyde 3-phosphate = dihydroxyacetone phosphate. The protein operates within carbohydrate biosynthesis; gluconeogenesis. It functions in the pathway carbohydrate degradation; glycolysis; D-glyceraldehyde 3-phosphate from glycerone phosphate: step 1/1. Involved in the gluconeogenesis. Catalyzes stereospecifically the conversion of dihydroxyacetone phosphate (DHAP) to D-glyceraldehyde-3-phosphate (G3P). This is Triosephosphate isomerase from Brucella abortus biovar 1 (strain 9-941).